The following is a 479-amino-acid chain: Lincomycin resistance protein LmrB (479 aa).

A run of 14 helical transmembrane segments spans residues 19-41 (MISLLLAGFIGMFSETALNIALT), 56-78 (WLTTGYLLVLGILVPVSGLLLQW), 85-107 (FTVSLIFSILGTFIAALAPSFSF), 112-134 (RIVQALGTGLLLPLMFNTILVIF), 141-160 (AAMGTIGLVIMFAPAIGPTF), 170-192 (WHWIFWISLPFLVLALVFGIAYM), 205-222 (VLSIILSTIGFGGIVFGF), 232-251 (WSSPTVIVSLIVGVVGLILF), 272-294 (MFILGVIMVFICMMVILSSMLLL), 304-326 (LTAFASGLVLLPGGILNGFMSPV), 338-355 (WLVIPGFVIVTVVLWFFS), 360-382 (TSTAVLIIILHTCLMIGISMIMM), 403-425 (IMNTLQQMAGAIGTAVAVSIMAA), and 449-471 (AGVQHAFVFAMIVAIIGLIGAFF).

It belongs to the major facilitator superfamily. EmrB family.

Its subcellular location is the cell membrane. Proton-dependent transporter. May mediate the efflux of lincomycin. This is Lincomycin resistance protein LmrB (lmrB) from Bacillus subtilis (strain 168).